Here is a 191-residue protein sequence, read N- to C-terminus: Sec-independent protein translocase protein TatB (191 aa).

A helical transmembrane segment spans residues 1-21 (MFDIGFSELFLILVIGLLVLG). Polar residues predominate over residues 119 to 138 (ESTSQTLTEQLTPSEQVTEA). Disordered stretches follow at residues 119–139 (ESTS…TEAT) and 168–191 (DDDD…DKKA). Residues 181–191 (PQTEEIQDKKA) are compositionally biased toward basic and acidic residues.

This sequence belongs to the TatB family. As to quaternary structure, the Tat system comprises two distinct complexes: a TatABC complex, containing multiple copies of TatA, TatB and TatC subunits, and a separate TatA complex, containing only TatA subunits. Substrates initially bind to the TatABC complex, which probably triggers association of the separate TatA complex to form the active translocon.

The protein localises to the cell inner membrane. Functionally, part of the twin-arginine translocation (Tat) system that transports large folded proteins containing a characteristic twin-arginine motif in their signal peptide across membranes. Together with TatC, TatB is part of a receptor directly interacting with Tat signal peptides. TatB may form an oligomeric binding site that transiently accommodates folded Tat precursor proteins before their translocation. This is Sec-independent protein translocase protein TatB from Pasteurella multocida (strain Pm70).